Here is a 1581-residue protein sequence, read N- to C-terminus: Maestro heat-like repeat-containing protein family member 2B (1581 aa).

16 HEAT repeats span residues 123–160 (FMMM…SIYK), 305–342 (ANPV…AEEP), 401–441 (MSNR…LVIG), 464–501 (DYLF…KLPS), 526–543 (AIGL…KLAE), 544–580 (MWKT…SLWK), 658–695 (ENHL…LTKT), 773–815 (TYKE…LKPA), 960–997 (CQEV…KFIP), 1017–1055 (PLCT…HMPV), 1112–1150 (KLMR…TGAH), 1153–1191 (HLYP…LGER), 1254–1291 (GVIL…EPIL), 1295–1332 (GNLR…GAPH), 1359–1379 (CESL…DINF), and 1380–1416 (YFKE…LTGR).

Found in a complex at least composed of MROH2B isoform 2, PRKACA isoform 2 and TCP11. Interacts with PRKACA isoform 2. Interacts with TCP11. Constitutively phosphorylated on serine and threonine residues in acrosomal region of the sperm head, midpiece and flagellar regions of noncapacitated spermatozoa. Phosphorylation on tyrosine residues increases upon sperm capacitation within the acrosomal and tail regions in a protein kinase A (PKA)-dependent signaling pathway. As to expression, expressed strongly in round spermatids and fully mature spermatozoa. Expressed weakly in pachytene spermatocytes (at protein level). Isoform 2 is specifically expressed in the testis. Isoform 2 is expressed in pachytene spermatocytes and round spermatids. Isoform 3 is weakly expressed in testis.

It localises to the cytoplasm. The protein resides in the cytoplasmic vesicle. The protein localises to the secretory vesicle. It is found in the acrosome. Its subcellular location is the cell projection. It localises to the cilium. The protein resides in the flagellum. May play a role in the process of sperm capacitation. In Mus musculus (Mouse), this protein is Maestro heat-like repeat-containing protein family member 2B.